Consider the following 362-residue polypeptide: MAPKQDPKPKFQEGERVLCFHGPLLYEAKCVKVAIKDKQVKYFIHYSGWNKKSAVRPRRSEKSLKTHEDIVALFPVPEGAPSVHHPLLTSSWDEWVPESRVLKYVDTNLQKQRELQKANQEQYAEGKMRGAAPGKKTSGLQQKNVEVKTKKNKQKTPGNGDGGSTSETPQPPRKKRARVDPTVENEETFMNRVEVKVKIPEELKPWLVDDWDLITRQKQLFYLPAKKNVDSILEDYANYKKSRGNTDNKEYAVNEVVAGIKEYFNVMLGTQLLYKFERPQYAEILADHPDAPMSQVYGAPHLLRLFVRIGAMLAYTPLDEKSLALLLNYLHDFLKYLAKNSATLFSASDYEVAPPEYHRKAV.

The Tudor-knot domain maps to 12-51; sequence QEGERVLCFHGPLLYEAKCVKVAIKDKQVKYFIHYSGWNK. An interaction with KAT8 region spans residues 26-62; the sequence is YEAKCVKVAIKDKQVKYFIHYSGWNKKSAVRPRRSEK. Residues 113 to 182 are disordered; sequence RELQKANQEQ…RKKRARVDPT (70 aa). Residues 133-266 are sufficient for interaction with SIN3A; it reads PGKKTSGLQQ…VAGIKEYFNV (134 aa). The Nuclear localization signal motif lies at 135–146; sequence KKTSGLQQKNVE. K143 carries the post-translational modification N6-acetyllysine. The tract at residues 164 to 230 is interaction with RB1-1; sequence STSETPQPPR…FYLPAKKNVD (67 aa). Residues 188–342 form a sufficient for interaction with PHF12 region; that stretch reads TFMNRVEVKV…FLKYLAKNSA (155 aa). The MRG domain maps to 191–362; that stretch reads NRVEVKVKIP…APPEYHRKAV (172 aa). The interaction with RB1-2 stretch occupies residues 323–344; sequence LALLLNYLHDFLKYLAKNSATL.

Component of the NuA4 histone acetyltransferase complex which contains the catalytic subunit KAT5/TIP60 and the subunits EP400, TRRAP/PAF400, BRD8/SMAP, EPC1, DMAP1/DNMAP1, RUVBL1/TIP49, RUVBL2, ING3, actin, ACTL6A/BAF53A, MORF4L1/MRG15, MORF4L2/MRGX, MRGBP, YEATS4/GAS41, VPS72/YL1 and MEAF6. The NuA4 complex interacts with MYC and the adenovirus E1A protein. MORF4L1 may also participate in the formation of NuA4 related complexes which lack the KAT5/TIP60 catalytic subunit, but which include the SWI/SNF related protein SRCAP. Component of the mSin3A histone deacetylase complex, which includes SIN3A, HDAC2, ARID4B, MORF4L1, RBBP4/RbAp48, and RBBP7/RbAp46. May also interact with PHF12 and one or more as yet undefined members of the TLE (transducin-like enhancer of split) family of transcriptional repressors. Component of the SIN3B complex, which includes SIN3B, HDAC2 or HDAC1, PHF12 and MORF4L1. Interacts with RB1 and KAT8. Interacts with the N-terminus of MRFAP1. Found in a complex composed of MORF4L1, MRFAP1 and RB1. Interacts with the entire BRCA complex, which contains BRCA1, PALB2, BRCA2 and RAD51. Interacts with PALB2. Forms a complex with MSL1 and NUPR1.

It is found in the nucleus. Its function is as follows. Component of the NuA4 histone acetyltransferase (HAT) complex which is involved in transcriptional activation of select genes principally by acetylation of nucleosomal histones H4 and H2A. This modification may both alter nucleosome - DNA interactions and promote interaction of the modified histones with other proteins which positively regulate transcription. This complex may be required for the activation of transcriptional programs associated with oncogene and proto-oncogene mediated growth induction, tumor suppressor mediated growth arrest and replicative senescence, apoptosis, and DNA repair. The NuA4 complex ATPase and helicase activities seem to be, at least in part, contributed by the association of RUVBL1 and RUVBL2 with EP400. NuA4 may also play a direct role in DNA repair when directly recruited to sites of DNA damage. As part of the SIN3B complex represses transcription and counteracts the histone acetyltransferase activity of EP300 through the recognition H3K27ac marks by PHF12 and the activity of the histone deacetylase HDAC2. SIN3B complex is recruited downstream of the constitutively active genes transcriptional start sites through interaction with histones and mitigates histone acetylation and RNA polymerase II progression within transcribed regions contributing to the regulation of transcription. Required for homologous recombination repair (HRR) and resistance to mitomycin C (MMC). Involved in the localization of PALB2, BRCA2 and RAD51, but not BRCA1, to DNA-damage foci. The sequence is that of Mortality factor 4-like protein 1 from Homo sapiens (Human).